Here is a 207-residue protein sequence, read N- to C-terminus: Ribonuclease HII (207 aa).

Residues 20 to 207 (QLFAGVDEVG…KPVKRVLGIE (188 aa)) enclose the RNase H type-2 domain. A divalent metal cation contacts are provided by Asp-26, Glu-27, and Asp-118.

The protein belongs to the RNase HII family. Mn(2+) is required as a cofactor. Mg(2+) serves as cofactor.

It localises to the cytoplasm. It catalyses the reaction Endonucleolytic cleavage to 5'-phosphomonoester.. In terms of biological role, endonuclease that specifically degrades the RNA of RNA-DNA hybrids. The polypeptide is Ribonuclease HII (Aliivibrio salmonicida (strain LFI1238) (Vibrio salmonicida (strain LFI1238))).